Reading from the N-terminus, the 124-residue chain is MPTPPCPCGRSESYEKCCGRFHGGTAAAPTAEALMRSRYCAFVQGDASYLLRTWHPRTRPARLDLDPGMRWTGLEILDTADGSAFHTTGTVTFRASYRGGSLHERSRFERVDGAWVYADGEFLD.

Belongs to the UPF0225 family.

This Streptomyces coelicolor (strain ATCC BAA-471 / A3(2) / M145) protein is UPF0225 protein SCO1677.